The primary structure comprises 372 residues: N-methyl-L-tryptophan oxidase (372 aa).

4 to 34 is an FAD binding site; the sequence is DLIIIGSGSVGAAAGYYATRAGLKVLMTDAH. C307 carries the post-translational modification S-8alpha-FAD cysteine.

The protein belongs to the MSOX/MTOX family. MTOX subfamily. In terms of assembly, monomer. The cofactor is FAD.

The enzyme catalyses N(alpha)-methyl-L-tryptophan + O2 + H2O = L-tryptophan + formaldehyde + H2O2. In terms of biological role, catalyzes the oxidative demethylation of N-methyl-L-tryptophan. The chain is N-methyl-L-tryptophan oxidase from Salmonella heidelberg (strain SL476).